Consider the following 453-residue polypeptide: tRNA modification GTPase MnmE (453 aa).

Positions 22, 79, and 119 each coordinate (6S)-5-formyl-5,6,7,8-tetrahydrofolate. One can recognise a TrmE-type G domain in the interval 215–376 (GMKVVIAGRP…LRNHLKECMG (162 aa)). Asn-225 lines the K(+) pocket. Residues 225–230 (NAGKSS), 244–250 (TDIAGTT), 269–272 (DTAG), and 334–337 (NKAD) contribute to the GTP site. Residue Ser-229 coordinates Mg(2+). The K(+) site is built by Thr-244, Ile-246, and Thr-249. Thr-250 lines the Mg(2+) pocket. Lys-453 is a (6S)-5-formyl-5,6,7,8-tetrahydrofolate binding site.

This sequence belongs to the TRAFAC class TrmE-Era-EngA-EngB-Septin-like GTPase superfamily. TrmE GTPase family. As to quaternary structure, homodimer. Heterotetramer of two MnmE and two MnmG subunits. Requires K(+) as cofactor.

The protein resides in the cytoplasm. Its function is as follows. Exhibits a very high intrinsic GTPase hydrolysis rate. Involved in the addition of a carboxymethylaminomethyl (cmnm) group at the wobble position (U34) of certain tRNAs, forming tRNA-cmnm(5)s(2)U34. This is tRNA modification GTPase MnmE from Vibrio parahaemolyticus serotype O3:K6 (strain RIMD 2210633).